Here is a 328-residue protein sequence, read N- to C-terminus: Ketol-acid reductoisomerase (NADP(+)) (328 aa).

In terms of domain architecture, KARI N-terminal Rossmann spans 2–181; the sequence is AKIYRETDAD…GFTRVGVIET (180 aa). Residues 25–28, Arg-48, Ser-52, and 82–85 each bind NADP(+); these read YGIQ and DMVQ. The active site involves His-107. Gly-133 is a binding site for NADP(+). In terms of domain architecture, KARI C-terminal knotted spans 182 to 327; the sequence is TFAEETETDL…EDLRRLMRSG (146 aa). Asp-190, Glu-194, Glu-226, and Glu-230 together coordinate Mg(2+). Residue Ser-251 participates in substrate binding.

The protein belongs to the ketol-acid reductoisomerase family. Requires Mg(2+) as cofactor.

It carries out the reaction (2R)-2,3-dihydroxy-3-methylbutanoate + NADP(+) = (2S)-2-acetolactate + NADPH + H(+). The catalysed reaction is (2R,3R)-2,3-dihydroxy-3-methylpentanoate + NADP(+) = (S)-2-ethyl-2-hydroxy-3-oxobutanoate + NADPH + H(+). The protein operates within amino-acid biosynthesis; L-isoleucine biosynthesis; L-isoleucine from 2-oxobutanoate: step 2/4. It participates in amino-acid biosynthesis; L-valine biosynthesis; L-valine from pyruvate: step 2/4. Its function is as follows. Involved in the biosynthesis of branched-chain amino acids (BCAA). Catalyzes an alkyl-migration followed by a ketol-acid reduction of (S)-2-acetolactate (S2AL) to yield (R)-2,3-dihydroxy-isovalerate. In the isomerase reaction, S2AL is rearranged via a Mg-dependent methyl migration to produce 3-hydroxy-3-methyl-2-ketobutyrate (HMKB). In the reductase reaction, this 2-ketoacid undergoes a metal-dependent reduction by NADPH to yield (R)-2,3-dihydroxy-isovalerate. The sequence is that of Ketol-acid reductoisomerase (NADP(+)) from Caldivirga maquilingensis (strain ATCC 700844 / DSM 13496 / JCM 10307 / IC-167).